The following is a 168-amino-acid chain: MLAVYPGSFDPITLGHLDIIERGARLFSEVIVAIAHNPQKKALFSVGQRIKQVQAATSHLKNVRVDTFDGLTVEYARSQRARVLLRGLRVLSDFEYELQMSHTNKSLWPEIETVFLTTSNEYSFLSSSLVKEIARFGGNVRHLVPANVAKDLEACFTQTPIPSQRPLE.

Ser8 serves as a coordination point for substrate. Residues 8 to 9 (SF) and His16 contribute to the ATP site. Substrate-binding residues include Lys40, Thr72, and Arg86. ATP-binding positions include 87–89 (GLR), Glu97, and 122–128 (YSFLSSS).

Belongs to the bacterial CoaD family. Homohexamer. The cofactor is Mg(2+).

The protein resides in the cytoplasm. The enzyme catalyses (R)-4'-phosphopantetheine + ATP + H(+) = 3'-dephospho-CoA + diphosphate. It functions in the pathway cofactor biosynthesis; coenzyme A biosynthesis; CoA from (R)-pantothenate: step 4/5. Functionally, reversibly transfers an adenylyl group from ATP to 4'-phosphopantetheine, yielding dephospho-CoA (dPCoA) and pyrophosphate. The protein is Phosphopantetheine adenylyltransferase of Thermosynechococcus vestitus (strain NIES-2133 / IAM M-273 / BP-1).